The sequence spans 124 residues: Ribonuclease pancreatic (124 aa).

Residues 1-24 (KESSAMKFQRQHMDSSGSPSTNAN) are disordered. Lysine 7 and arginine 10 together coordinate substrate. Residue histidine 12 is the Proton acceptor of the active site. Over residues 14–24 (DSSGSPSTNAN) the composition is skewed to polar residues. 4 disulfides stabilise this stretch: cysteine 26–cysteine 84, cysteine 40–cysteine 95, cysteine 58–cysteine 110, and cysteine 65–cysteine 72. Residue asparagine 34 is glycosylated (N-linked (GlcNAc...) asparagine). Substrate-binding positions include 41 to 45 (KPVNT), lysine 66, and arginine 85. The Proton donor role is filled by histidine 119.

It belongs to the pancreatic ribonuclease family. In terms of assembly, monomer. Interacts with and forms tight 1:1 complexes with RNH1. Dimerization of two such complexes may occur. Interaction with RNH1 inhibits this protein. As to expression, pancreas.

The protein resides in the secreted. The enzyme catalyses an [RNA] containing cytidine + H2O = an [RNA]-3'-cytidine-3'-phosphate + a 5'-hydroxy-ribonucleotide-3'-[RNA].. It carries out the reaction an [RNA] containing uridine + H2O = an [RNA]-3'-uridine-3'-phosphate + a 5'-hydroxy-ribonucleotide-3'-[RNA].. Functionally, endonuclease that catalyzes the cleavage of RNA on the 3' side of pyrimidine nucleotides. Acts on single-stranded and double-stranded RNA. The protein is Ribonuclease pancreatic (RNASE1) of Chinchilla chinchilla (Short-tailed chinchilla).